We begin with the raw amino-acid sequence, 828 residues long: DNA gyrase subunit A (828 aa).

Residues 32–497 (LPDVRDGLKP…EVLSLEDEDL (466 aa)) enclose the Topo IIA-type catalytic domain. Catalysis depends on tyrosine 120, which acts as the O-(5'-phospho-DNA)-tyrosine intermediate. The GyrA-box signature appears at 524 to 530 (QKRGGRG).

It belongs to the type II topoisomerase GyrA/ParC subunit family. Heterotetramer, composed of two GyrA and two GyrB chains. In the heterotetramer, GyrA contains the active site tyrosine that forms a transient covalent intermediate with DNA, while GyrB binds cofactors and catalyzes ATP hydrolysis.

The protein localises to the cytoplasm. The catalysed reaction is ATP-dependent breakage, passage and rejoining of double-stranded DNA.. In terms of biological role, a type II topoisomerase that negatively supercoils closed circular double-stranded (ds) DNA in an ATP-dependent manner to modulate DNA topology and maintain chromosomes in an underwound state. Negative supercoiling favors strand separation, and DNA replication, transcription, recombination and repair, all of which involve strand separation. Also able to catalyze the interconversion of other topological isomers of dsDNA rings, including catenanes and knotted rings. Type II topoisomerases break and join 2 DNA strands simultaneously in an ATP-dependent manner. The protein is DNA gyrase subunit A of Streptococcus pyogenes serotype M6 (strain ATCC BAA-946 / MGAS10394).